The chain runs to 581 residues: Protein phosphatase 2C 70 (581 aa).

The Extracellular segment spans residues 1–7 (MAMIGMN). Residues 8–28 (IIGLFMVLMLLLISLIILFAC) traverse the membrane as a helical segment. Residues 29 to 581 (KPWRYFSRFR…IIYLDFDTSL (553 aa)) are Cytoplasmic-facing. The region spanning 208-259 (VKLGRVSPSDLALKDSEVSGKHAQITWNSTKFKWELVDMGSLNGTLVNSHSI) is the FHA domain. The 274-residue stretch at 304–577 (KIGVASDPMA…DNTSIIYLDF (274 aa)) folds into the PPM-type phosphatase domain. Residues D346, G347, D521, and D568 each coordinate Mn(2+).

Association of RLK5 with kapp domain is dependent on phosphorylation of RLK5 and can be abolished by dephosphorylation. Interacts with SERK1 and CDC48A. Component of the SERK1 signaling complex, composed of KAPP, CDC48A, GRF6 or GRF7, SERK1, SERK2, SERK3/BAK1 and BRI1. Interacts with CLV1. Mg(2+) serves as cofactor. It depends on Mn(2+) as a cofactor. Expressed in all tissues examined.

Its subcellular location is the cell membrane. It catalyses the reaction O-phospho-L-seryl-[protein] + H2O = L-seryl-[protein] + phosphate. The enzyme catalyses O-phospho-L-threonyl-[protein] + H2O = L-threonyl-[protein] + phosphate. Its function is as follows. Dephosphorylates the Ser/Thr receptor-like kinase RLK5. May function as a signaling component in a pathway involving RLK5. Binds and dephosphorylates CLAVATA1 (CLV1). Functions as a negative regulator of the CLV1 signaling in plant development. Dephosphorylates SERK1 receptor kinase on threonine residues in the A-loop. Dephosphorylation of SERK1 controls SERK1 internalization. Component of a signaling pathway which mediates adaptation to NaCl stress. Is not a component of the SALT OVERLY SENSITIVE (SOS) pathway. The chain is Protein phosphatase 2C 70 from Arabidopsis thaliana (Mouse-ear cress).